The following is a 314-amino-acid chain: NAD-dependent protein lipoamidase sirtuin-4, mitochondrial (314 aa).

The transit peptide at 1 to 28 directs the protein to the mitochondrion; it reads MKMSFALTFRSAKGRWIANPSQPCSKAS. A Deacetylase sirtuin-type domain is found at 37–314; it reads PPLDPEKVKE…GELLPLIDPC (278 aa). Residues 62 to 82 and 143 to 146 each bind NAD(+); these read GAGI…VGLY and QNVD. The Proton acceptor role is filled by His161. Cys169, Cys172, Cys220, and Cys223 together coordinate Zn(2+). NAD(+)-binding positions include 260-262, 286-288, and Cys304; these read GSS and NIG.

It belongs to the sirtuin family. Class II subfamily. Interacts with GLUD1, IDE and SLC25A5. Interacts with DLAT and PDHX. Interacts with MCCC1 (via the biotin carboxylation domain). Interacts with PCCA and PC. Requires Zn(2+) as cofactor. As to expression, detected in vascular smooth muscle and striated muscle. Detected in insulin-producing beta-cells in pancreas islets of Langerhans (at protein level). Widely expressed. Weakly expressed in leukocytes and fetal thymus.

The protein localises to the mitochondrion matrix. The catalysed reaction is N(6)-[(R)-lipoyl]-L-lysyl-[protein] + NAD(+) + H2O = 2''-O-lipoyl-ADP-D-ribose + nicotinamide + L-lysyl-[protein]. It catalyses the reaction N(6)-biotinyl-L-lysyl-[protein] + NAD(+) + H2O = 2''-O-biotinyl-ADP-D-ribose + nicotinamide + L-lysyl-[protein]. The enzyme catalyses N(6)-acetyl-L-lysyl-[protein] + NAD(+) + H2O = 2''-O-acetyl-ADP-D-ribose + nicotinamide + L-lysyl-[protein]. It carries out the reaction L-cysteinyl-[protein] + NAD(+) = S-(ADP-D-ribosyl)-L-cysteinyl-[protein] + nicotinamide + H(+). Its function is as follows. Acts as a NAD-dependent protein lipoamidase, biotinylase, deacetylase and ADP-ribosyl transferase. Catalyzes more efficiently removal of lipoyl- and biotinyl- than acetyl-lysine modifications. Inhibits the pyruvate dehydrogenase complex (PDH) activity via the enzymatic hydrolysis of the lipoamide cofactor from the E2 component, DLAT, in a phosphorylation-independent manner. Catalyzes the transfer of ADP-ribosyl groups onto target proteins, including mitochondrial GLUD1, inhibiting GLUD1 enzyme activity. Acts as a negative regulator of mitochondrial glutamine metabolism by mediating mono ADP-ribosylation of GLUD1: expressed in response to DNA damage and negatively regulates anaplerosis by inhibiting GLUD1, leading to block metabolism of glutamine into tricarboxylic acid cycle and promoting cell cycle arrest. In response to mTORC1 signal, SIRT4 expression is repressed, promoting anaplerosis and cell proliferation. Acts as a tumor suppressor. Also acts as a NAD-dependent protein deacetylase: mediates deacetylation of 'Lys-471' of MLYCD, inhibiting its activity, thereby acting as a regulator of lipid homeostasis. Does not seem to deacetylate PC. Controls fatty acid oxidation by inhibiting PPARA transcriptional activation. Impairs SIRT1-PPARA interaction probably through the regulation of NAD(+) levels. Down-regulates insulin secretion. The chain is NAD-dependent protein lipoamidase sirtuin-4, mitochondrial from Homo sapiens (Human).